A 67-amino-acid polypeptide reads, in one-letter code: Mu-conotoxin TsIIIA (67 aa).

The N-terminal stretch at 1–20 (MMSKLGVLLTICLLLFPLTA) is a signal peptide. Residues 21–48 (VPLDGDQPADQPAERKQNEQHPLFDQKR) constitute a propeptide that is removed on maturation. 3 disulfides stabilise this stretch: C50–C59, C51–C64, and C55–C65.

The protein belongs to the conotoxin M superfamily. Expressed by the venom duct.

The protein resides in the secreted. Mu-conotoxins block voltage-gated sodium channels (Nav). This toxin specifically inhibits mammalian Nav1.8/SCN10A sodium currents (IC(50)=2.11 uM) without inducing a shift in the current-voltage relationship of this channel. In vivo, shows potent analgesic activity in a mice hotplate analgesic assay. In addition, this toxin has better analgesic effects than Ziconotide, an analgesic drug. This Conus tessulatus (Tessellate cone) protein is Mu-conotoxin TsIIIA.